The sequence spans 339 residues: Glycerol-3-phosphate dehydrogenase [NAD(P)+] (339 aa).

The NADPH site is built by S15, Y16, H36, and K110. K110, G139, and T141 together coordinate sn-glycerol 3-phosphate. A143 contacts NADPH. Sn-glycerol 3-phosphate-binding residues include K195, D248, S258, R259, and N260. K195 (proton acceptor) is an active-site residue. R259 contributes to the NADPH binding site. NADPH-binding residues include V283 and E285.

Belongs to the NAD-dependent glycerol-3-phosphate dehydrogenase family.

The protein resides in the cytoplasm. The enzyme catalyses sn-glycerol 3-phosphate + NAD(+) = dihydroxyacetone phosphate + NADH + H(+). It catalyses the reaction sn-glycerol 3-phosphate + NADP(+) = dihydroxyacetone phosphate + NADPH + H(+). It participates in membrane lipid metabolism; glycerophospholipid metabolism. Functionally, catalyzes the reduction of the glycolytic intermediate dihydroxyacetone phosphate (DHAP) to sn-glycerol 3-phosphate (G3P), the key precursor for phospholipid synthesis. This Escherichia coli O17:K52:H18 (strain UMN026 / ExPEC) protein is Glycerol-3-phosphate dehydrogenase [NAD(P)+].